Consider the following 115-residue polypeptide: Large ribosomal subunit protein bL20 (115 aa).

The protein belongs to the bacterial ribosomal protein bL20 family.

Functionally, binds directly to 23S ribosomal RNA and is necessary for the in vitro assembly process of the 50S ribosomal subunit. It is not involved in the protein synthesizing functions of that subunit. The sequence is that of Large ribosomal subunit protein bL20 from Mycoplasmoides gallisepticum (strain R(low / passage 15 / clone 2)) (Mycoplasma gallisepticum).